Here is a 392-residue protein sequence, read N- to C-terminus: Leucine-rich repeat-containing protein 74B (392 aa).

The disordered stretch occupies residues 24-46 (RLSGVPEAEQGPEANWDSDLETE). LRR repeat units lie at residues 106–129 (NPYV…ALAG), 134–157 (SSSI…ALCA), 162–185 (NQAM…HLAE), 192–213 (DLKS…TLGP), 220–241 (GLTE…AFAR), 248–269 (FLKV…AVGE), 276–297 (VLEE…SLGL), 304–325 (TLRI…GLLK), and 334–356 (ALEL…ASSV).

This chain is Leucine-rich repeat-containing protein 74B, found in Homo sapiens (Human).